The following is a 481-amino-acid chain: ATP synthase subunit alpha (481 aa).

145-152 contributes to the ATP binding site; that stretch reads GDRQTGKT.

This sequence belongs to the ATPase alpha/beta chains family. In terms of assembly, F-type ATPases have 2 components, CF(1) - the catalytic core - and CF(0) - the membrane proton channel. CF(1) has five subunits: alpha(3), beta(3), gamma(1), delta(1), epsilon(1). CF(0) has three main subunits: a(1), b(2) and c(9-12). The alpha and beta chains form an alternating ring which encloses part of the gamma chain. CF(1) is attached to CF(0) by a central stalk formed by the gamma and epsilon chains, while a peripheral stalk is formed by the delta and b chains.

The protein resides in the cell membrane. The enzyme catalyses ATP + H2O + 4 H(+)(in) = ADP + phosphate + 5 H(+)(out). Functionally, produces ATP from ADP in the presence of a proton gradient across the membrane. The alpha chain is a regulatory subunit. This Carsonella ruddii (strain PV) protein is ATP synthase subunit alpha.